Reading from the N-terminus, the 745-residue chain is Phosphoribosylformylglycinamidine synthase subunit PurL (745 aa).

The active site involves His47. Residues Tyr50 and Lys90 each contribute to the ATP site. A Mg(2+)-binding site is contributed by Glu92. Residues Ser93–His96 and Arg115 each bind substrate. His94 acts as the Proton acceptor in catalysis. Asp116 serves as a coordination point for Mg(2+). Gln240 contributes to the substrate binding site. Asp268 contributes to the Mg(2+) binding site. Glu312 to Gln314 lines the substrate pocket. Residues Asn501 and Gly538 each contribute to the ATP site. Position 539 (Asn539) interacts with Mg(2+). Residue Ser541 coordinates substrate.

The protein belongs to the FGAMS family. As to quaternary structure, monomer. Part of the FGAM synthase complex composed of 1 PurL, 1 PurQ and 2 PurS subunits.

Its subcellular location is the cytoplasm. The catalysed reaction is N(2)-formyl-N(1)-(5-phospho-beta-D-ribosyl)glycinamide + L-glutamine + ATP + H2O = 2-formamido-N(1)-(5-O-phospho-beta-D-ribosyl)acetamidine + L-glutamate + ADP + phosphate + H(+). It functions in the pathway purine metabolism; IMP biosynthesis via de novo pathway; 5-amino-1-(5-phospho-D-ribosyl)imidazole from N(2)-formyl-N(1)-(5-phospho-D-ribosyl)glycinamide: step 1/2. Its function is as follows. Part of the phosphoribosylformylglycinamidine synthase complex involved in the purines biosynthetic pathway. Catalyzes the ATP-dependent conversion of formylglycinamide ribonucleotide (FGAR) and glutamine to yield formylglycinamidine ribonucleotide (FGAM) and glutamate. The FGAM synthase complex is composed of three subunits. PurQ produces an ammonia molecule by converting glutamine to glutamate. PurL transfers the ammonia molecule to FGAR to form FGAM in an ATP-dependent manner. PurS interacts with PurQ and PurL and is thought to assist in the transfer of the ammonia molecule from PurQ to PurL. This is Phosphoribosylformylglycinamidine synthase subunit PurL from Leptospira borgpetersenii serovar Hardjo-bovis (strain JB197).